We begin with the raw amino-acid sequence, 570 residues long: Phosphocholine hydrolase Lem3 (570 aa).

It localises to the secreted. Its subcellular location is the host cytoplasm. It catalyses the reaction [Rab1 protein]-O-phosphocholine-L-serine + H2O = [Rab1 protein]-L-serine + phosphocholine + H(+). Functionally, virulence effector that plays a role in hijacking the host vesicular trafficking by recruiting the small guanosine triphosphatase (GTPase) Rab1 to the cytosolic face of the Legionella-containing vacuole (LCVs). Acts as a phosphocholine hydrolase by mediating the hydrolysis of phosphocholine to Ser residues of host RAB1 (RAB1A, RAB1B or RAB1C). Dephosphocholination of target proteins restores accessibility to GTPase effector LepB. Can act on both GDP-bound and GTP-bound Rab proteins. The sequence is that of Phosphocholine hydrolase Lem3 (lem3) from Legionella pneumophila subsp. pneumophila (strain Philadelphia 1 / ATCC 33152 / DSM 7513).